Here is a 525-residue protein sequence, read N- to C-terminus: NGFI-A-binding protein 2 (525 aa).

Residues 1 to 22 are disordered; sequence MHRAPSPTAEQPPGGGDSARRT. Phosphoserine is present on serine 6. The tract at residues 35-113 is NCD1; the sequence is ALPRTLGELQ…REWATNPGLF (79 aa). Positions 135 to 237 are disordered; sequence GTRKGSMSNG…GGTGGGPDRL (103 aa). Phosphoserine occurs at positions 157, 159, 162, and 171. The span at 212–234 shows a compositional bias: gly residues; it reads AGGGVPEGTGAGGLAAGGTGGGP. Positions 267–356 are NCD2; that stretch reads LLKLNKKLAR…SRQVARESTY (90 aa). The interval 353-384 is necessary for nuclear localization; it reads ESTYLSSLKGSRLHPEELGGPPLKKLKQEVGE. Lysine 379 participates in a covalent cross-link: Glycyl lysine isopeptide (Lys-Gly) (interchain with G-Cter in SUMO1). The disordered stretch occupies residues 380-416; sequence QEVGEQSHPEIQQPPPGPESYVPPYRPSLEEDSASLS. At serine 479 the chain carries Phosphoserine. The tract at residues 502-525 is disordered; it reads PGPHPALVEGRRSSVKVEAEASRQ. Basic and acidic residues predominate over residues 510-525; that stretch reads EGRRSSVKVEAEASRQ. Lysine 517 is covalently cross-linked (Glycyl lysine isopeptide (Lys-Gly) (interchain with G-Cter in SUMO1); alternate). Lysine 517 participates in a covalent cross-link: Glycyl lysine isopeptide (Lys-Gly) (interchain with G-Cter in SUMO2); alternate.

This sequence belongs to the NAB family. Homomultimers may associate with EGR1 bound to DNA. In terms of processing, sumoylation by EGR2 represses EGR2 transcriptional activity in hindbrain. Widely expressed at low levels. Highly expressed in melanoma cell lines.

It is found in the nucleus. Its function is as follows. Acts as a transcriptional repressor for zinc finger transcription factors EGR1 and EGR2. Isoform 2 lacks repression ability. In Homo sapiens (Human), this protein is NGFI-A-binding protein 2 (NAB2).